A 503-amino-acid polypeptide reads, in one-letter code: ATP synthase subunit alpha (503 aa).

169-176 provides a ligand contact to ATP; the sequence is GDRSTGKT.

Belongs to the ATPase alpha/beta chains family. F-type ATPases have 2 components, CF(1) - the catalytic core - and CF(0) - the membrane proton channel. CF(1) has five subunits: alpha(3), beta(3), gamma(1), delta(1), epsilon(1). CF(0) has three main subunits: a(1), b(2) and c(9-12). The alpha and beta chains form an alternating ring which encloses part of the gamma chain. CF(1) is attached to CF(0) by a central stalk formed by the gamma and epsilon chains, while a peripheral stalk is formed by the delta and b chains.

The protein localises to the cell membrane. It carries out the reaction ATP + H2O + 4 H(+)(in) = ADP + phosphate + 5 H(+)(out). In terms of biological role, produces ATP from ADP in the presence of a proton gradient across the membrane. The alpha chain is a regulatory subunit. The sequence is that of ATP synthase subunit alpha from Dehalococcoides mccartyi (strain ATCC BAA-2100 / JCM 16839 / KCTC 5957 / BAV1).